Consider the following 412-residue polypeptide: Exodeoxyribonuclease 7 large subunit (412 aa).

Belongs to the XseA family. As to quaternary structure, heterooligomer composed of large and small subunits.

It is found in the cytoplasm. It catalyses the reaction Exonucleolytic cleavage in either 5'- to 3'- or 3'- to 5'-direction to yield nucleoside 5'-phosphates.. In terms of biological role, bidirectionally degrades single-stranded DNA into large acid-insoluble oligonucleotides, which are then degraded further into small acid-soluble oligonucleotides. The protein is Exodeoxyribonuclease 7 large subunit of Nostoc sp. (strain PCC 7120 / SAG 25.82 / UTEX 2576).